A 228-amino-acid chain; its full sequence is 7-cyano-7-deazaguanine synthase (228 aa).

Position 9–19 (9–19 (LSGGPDSTTVL)) interacts with ATP. Zn(2+) contacts are provided by C193, C203, C206, and C209.

The protein belongs to the QueC family. Zn(2+) serves as cofactor.

It catalyses the reaction 7-carboxy-7-deazaguanine + NH4(+) + ATP = 7-cyano-7-deazaguanine + ADP + phosphate + H2O + H(+). It participates in purine metabolism; 7-cyano-7-deazaguanine biosynthesis. Catalyzes the ATP-dependent conversion of 7-carboxy-7-deazaguanine (CDG) to 7-cyano-7-deazaguanine (preQ(0)). The sequence is that of 7-cyano-7-deazaguanine synthase from Rickettsia africae (strain ESF-5).